A 744-amino-acid polypeptide reads, in one-letter code: Phosphoribosylformylglycinamidine synthase subunit PurL (744 aa).

The active site involves His50. Positions 53 and 92 each coordinate ATP. Glu94 is a binding site for Mg(2+). Substrate-binding positions include 95–98 (SHNH) and Arg117. His96 acts as the Proton acceptor in catalysis. A Mg(2+)-binding site is contributed by Asp118. A substrate-binding site is contributed by Gln241. Mg(2+) is bound at residue Asp269. 313-315 (ESQ) is a binding site for substrate. ATP is bound by residues Asp495 and Gly532. Mg(2+) is bound at residue Asn533. Residue Ser535 participates in substrate binding.

Belongs to the FGAMS family. In terms of assembly, monomer. Part of the FGAM synthase complex composed of 1 PurL, 1 PurQ and 2 PurS subunits.

Its subcellular location is the cytoplasm. The enzyme catalyses N(2)-formyl-N(1)-(5-phospho-beta-D-ribosyl)glycinamide + L-glutamine + ATP + H2O = 2-formamido-N(1)-(5-O-phospho-beta-D-ribosyl)acetamidine + L-glutamate + ADP + phosphate + H(+). It functions in the pathway purine metabolism; IMP biosynthesis via de novo pathway; 5-amino-1-(5-phospho-D-ribosyl)imidazole from N(2)-formyl-N(1)-(5-phospho-D-ribosyl)glycinamide: step 1/2. In terms of biological role, part of the phosphoribosylformylglycinamidine synthase complex involved in the purines biosynthetic pathway. Catalyzes the ATP-dependent conversion of formylglycinamide ribonucleotide (FGAR) and glutamine to yield formylglycinamidine ribonucleotide (FGAM) and glutamate. The FGAM synthase complex is composed of three subunits. PurQ produces an ammonia molecule by converting glutamine to glutamate. PurL transfers the ammonia molecule to FGAR to form FGAM in an ATP-dependent manner. PurS interacts with PurQ and PurL and is thought to assist in the transfer of the ammonia molecule from PurQ to PurL. This chain is Phosphoribosylformylglycinamidine synthase subunit PurL, found in Rhizobium johnstonii (strain DSM 114642 / LMG 32736 / 3841) (Rhizobium leguminosarum bv. viciae).